The sequence spans 253 residues: 2-dehydro-3-deoxy-D-gluconate 5-dehydrogenase (253 aa).

14 to 38 (LITGCDTGLGQGMAVGLAEAGCDIV) is a binding site for NAD(+). Serine 145 contributes to the substrate binding site. Tyrosine 158 acts as the Proton acceptor in catalysis.

The protein belongs to the short-chain dehydrogenases/reductases (SDR) family.

The enzyme catalyses 2-dehydro-3-deoxy-D-gluconate + NAD(+) = 3-deoxy-D-glycero-2,5-hexodiulosonate + NADH + H(+). The protein operates within glycan metabolism; pectin degradation; 2-dehydro-3-deoxy-D-gluconate from pectin: step 5/5. Catalyzes the reduction of 2,5-diketo-3-deoxygluconate (DKII or 4,6-dihydroxy-2,5-dioxohexanoate) into 2-keto-3-deoxygluconate (KDG or 2-dehydro-3-deoxygluconate) with a concomitant oxidation of NADH. The chain is 2-dehydro-3-deoxy-D-gluconate 5-dehydrogenase (kduD) from Dickeya dadantii (strain 3937) (Erwinia chrysanthemi (strain 3937)).